Here is a 129-residue protein sequence, read N- to C-terminus: uncharacterized protein (129 aa).

Residues 103–125 (AISSAFQYGLSTSNFFFIFLYIF) form a helical membrane-spanning segment.

The protein resides in the membrane. This is an uncharacterized protein from Acanthamoeba polyphaga (Amoeba).